The following is a 342-amino-acid chain: Growth hormone-regulated TBC protein 1 (342 aa).

Positions 72–263 (GIPNEHRSHV…RIWDCLFFEG (192 aa)) constitute a Rab-GAP TBC domain.

Its function is as follows. May act as a GTPase-activating protein for Rab family protein(s). This chain is Growth hormone-regulated TBC protein 1 (grtp1), found in Xenopus laevis (African clawed frog).